The primary structure comprises 564 residues: Arginine--tRNA ligase (564 aa).

A 'HIGH' region motif is present at residues 122 to 132 (PNIAKPFSIGH).

The protein belongs to the class-I aminoacyl-tRNA synthetase family. Monomer.

It is found in the cytoplasm. It carries out the reaction tRNA(Arg) + L-arginine + ATP = L-arginyl-tRNA(Arg) + AMP + diphosphate. The polypeptide is Arginine--tRNA ligase (Lactococcus lactis subsp. cremoris (strain MG1363)).